Reading from the N-terminus, the 314-residue chain is Formate-nitrite transporter (314 aa).

The Cytoplasmic portion of the chain corresponds to 1-47 (MQKSTSKYVIDPISIKTNCSSEESYIRCVEYGKGKAHYRNLILLAKA). The helical transmembrane segment at 48–68 (ILAGVFVGVCAHASGIAGGLF) threads the bilayer. At 69–77 (YYHKLREYV) the chain is on the extracellular side. A helical transmembrane segment spans residues 78–98 (GISMSAFVYGFTFPIAFLCII). At 99 to 128 (CTGSDLFTGNTLAVTTALLQKKLGLLCYMR) the chain is on the cytoplasmic side. Residues 129–149 (VMCISLVGNYIGAVAFAFFVS) traverse the membrane as a helical segment. The Extracellular portion of the chain corresponds to 150–185 (YGSGAFSINTDTSKNHIFQFLNDIAIKKVSHSFIEC). A helical transmembrane segment spans residues 186–206 (ICLAIGCNIFVCLAVYFVLSI). Residues 207–211 (KDGSG) are Cytoplasmic-facing. Residues 212–232 (LVFSVFFAVYAFAIAGYEHII) traverse the membrane as a helical segment. Residues 233–260 (ANIYTLNLALMISNDISFTQVYFKNLLP) lie on the Extracellular side of the membrane. A helical transmembrane segment spans residues 261–281 (TLIGNYIAGGLVLAFPLFFIY). Topologically, residues 282 to 314 (RSCYYDYDKMNDELNTVVLKTLSLELQNESNHI) are cytoplasmic.

The protein belongs to the FNT transporter (TC 1.A.16) family. Homopentamer.

It is found in the cell membrane. The protein localises to the vacuole membrane. It catalyses the reaction (S)-lactate(in) + H(+)(in) = (S)-lactate(out) + H(+)(out). It carries out the reaction formate(in) + H(+)(in) = formate(out) + H(+)(out). The catalysed reaction is pyruvate(out) + H(+)(out) = pyruvate(in) + H(+)(in). The enzyme catalyses acetate(out) + H(+)(out) = acetate(in) + H(+)(in). With respect to regulation, inhibited by the Malaria Box compound MMV007839 and its derivatives BH296 and BH267.meta. In terms of biological role, monocarboxylate-proton symporter that mediates the efflux of the waste product lactate in the intraerythrocytic parasites; active in acidic-to-neutral pH range. Transports L-lactate. The polypeptide is Formate-nitrite transporter (Plasmodium malariae).